Consider the following 393-residue polypeptide: MVNGDLRIQYYDEELNIRKVIEQADLEHLDQALNICDLSSLERKLRLWHKLMPRIEPHYAVKCNDDPVVVKFLADLGTGFDCASKNELKLVLGLGVSPERIIFAHPCRPASHLRYAKEQQVVNGTVDNEYEIYKLRKHYPDSNLIVRFKSEAKKALCPLGDKYGCDAEADAAALMLLAKALGLKVTGTSFHVGSGCSEVEAYDRAIEKAENIFKVGEMIGHKMELLDVGGGFPGIDDEMFEEIAQSVNTSVELRFPDKRIRIISEPGRFFVEAAYTLICKVHAKREVRSKDGKLDTMMYYLNDGIFGAFAGMFYYPEEVAPELYLDEAESLPKLKSVIWGPSCDAMDKISDLLLPNLNPGDLLGFRNMGAYTMPIASPFNGFDVPETRFFKAK.

Lys62 is modified (N6-(pyridoxal phosphate)lysine). Pyridoxal 5'-phosphate contacts are provided by residues Ser194, Gly231, and 265–268 (EPGR). 314 to 315 (YY) is a substrate binding site. The active-site Proton donor; shared with dimeric partner is Cys343. A substrate-binding site is contributed by Asp344. Tyr371 contributes to the pyridoxal 5'-phosphate binding site.

Belongs to the Orn/Lys/Arg decarboxylase class-II family. Homodimer. Only the dimer is catalytically active, as the active sites are constructed of residues from both monomers. The cofactor is pyridoxal 5'-phosphate.

It carries out the reaction L-ornithine + H(+) = putrescine + CO2. The protein operates within amine and polyamine biosynthesis; putrescine biosynthesis via L-ornithine pathway; putrescine from L-ornithine: step 1/1. With respect to regulation, inhibited by antizyme (AZ) in response to polyamine levels. AZ inhibits the assembly of the functional homodimer by binding to ODC monomers and targeting them for ubiquitin-independent proteolytic destruction by the 26S proteasome. In terms of biological role, catalyzes the first and rate-limiting step of polyamine biosynthesis that converts ornithine into putrescine, which is the precursor for the polyamines, spermidine and spermine. Polyamines are essential for cell proliferation and are implicated in cellular processes, ranging from DNA replication to apoptosis. The polypeptide is Ornithine decarboxylase 2 (Odc2) (Drosophila melanogaster (Fruit fly)).